A 73-amino-acid chain; its full sequence is UPF0346 protein lp_1865 (73 aa).

It belongs to the UPF0346 family.

The protein is UPF0346 protein lp_1865 of Lactiplantibacillus plantarum (strain ATCC BAA-793 / NCIMB 8826 / WCFS1) (Lactobacillus plantarum).